The primary structure comprises 363 residues: Cytoskeleton protein RodZ (363 aa).

The Cytoplasmic portion of the chain corresponds to 1 to 111; the sequence is MNTEASQDQT…LGKKHKKRDG (111 aa). One can recognise an HTH cro/C1-type domain in the interval 19–79; the sequence is LRQARESLGL…KLVHLPEDEL (61 aa). The H-T-H motif DNA-binding region spans 30-49; it reads QQTVAERLCLKVSTIRDIEE. The chain crosses the membrane as a helical; Signal-anchor for type II membrane protein span at residues 112–132; sequence WLMSFTWLIVLVVLGLTGAWW. Residues 133–363 are Periplasmic-facing; sequence WQNHQAQQAE…RVARLTVGVE (231 aa). The tract at residues 151–277 is disordered; sequence SAQLSQNGGQ…PLPTADAGVS (127 aa). A compositionally biased stretch (polar residues) spans 188–199; sequence PLTNHSVSAITN. Low complexity predominate over residues 200 to 225; it reads SAPTTSSVPTTSSATTSSVPTTSSVP. Residues 226-243 are compositionally biased toward polar residues; the sequence is KINSTEPVDTANTNTTMH. Low complexity predominate over residues 247–259; it reads AASAAVSPSQVPQ.

It belongs to the RodZ family.

It localises to the cell inner membrane. Its function is as follows. Cytoskeletal protein that is involved in cell-shape control through regulation of the length of the long axis. The chain is Cytoskeleton protein RodZ from Yersinia pseudotuberculosis serotype O:1b (strain IP 31758).